Consider the following 1259-residue polypeptide: Clustered mitochondria protein homolog (1259 aa).

The span at 1-27 shows a compositional bias: polar residues; sequence MSQTNGNMEHSKETPQSQEVEQLTNGN. The tract at residues 1-38 is disordered; sequence MSQTNGNMEHSKETPQSQEVEQLTNGNHPEEQQEEEEN. The region spanning 324–568 is the Clu domain; it reads DITRSQESYL…RVTPLDVMWQ (245 aa). 2 stretches are compositionally biased toward basic and acidic residues: residues 612–628 and 634–647; these read AEAEKEKPAESSESKEQ and TEEKTEESSDQERV. Disordered stretches follow at residues 612 to 647 and 881 to 908; these read AEAEKEKPAESSESKEQDSEEKTEEKTEESSDQERV and VVNGANNAAQDEGKKKKKKGADKSPSRA. TPR repeat units lie at residues 982 to 1015, 1024 to 1057, and 1066 to 1099; these read AKLYHQLSMLYYQTDEKEAAVELARKAVIVTERT, ILAYLNLSLFEHASGNTKTALVYIKHAMDLWKII, and ITTMNNAAVMLQHLKQYADSRKWFEASLSVCESL. 2 disordered regions span residues 1192–1215 and 1229–1259; these read TKVQPQVGQTAPEASGAKNAANAS and EGGDTSSSRSKQKKRAAASNPKLRGSKKSSA.

Belongs to the CLU family. As to quaternary structure, may associate with the eukaryotic translation initiation factor 3 (eIF-3) complex.

The protein resides in the cytoplasm. In terms of biological role, mRNA-binding protein involved in proper cytoplasmic distribution of mitochondria. The protein is Clustered mitochondria protein homolog of Aspergillus clavatus (strain ATCC 1007 / CBS 513.65 / DSM 816 / NCTC 3887 / NRRL 1 / QM 1276 / 107).